A 326-amino-acid chain; its full sequence is MAQRVQLTATVSENQLGQRLDQALAEMFPDYSRSRIKEWILDQRVLVNGKVCDKPKEKVLGGEQVAINAEIEEEARFEPQDIPLDIVYEDEDIIIINKPRDLVVHPGAGNPDGTVLNALLHYYPPIADVPRAGIVHRLDKDTTGLMVVAKTVPAQTRLVESLQRREITREYEAVAIGHMTAGGTVDEPISRHPTKRTHMAVHPMGKPAVTHYRIMEHFRVHTRLRLRLETGRTHQIRVHMAHITHPLVGDPVYGGRPRPPKGASEAFISTLRKFDRQALHATMLRLYHPISGIEMEWHAPIPQDMVELIEVMRADFEEHKDEVDWL.

Residues 18-91 (QRLDQALAEM…IPLDIVYEDE (74 aa)) enclose the S4 RNA-binding domain. Residue Asp-139 is part of the active site.

The protein belongs to the pseudouridine synthase RluA family. In terms of assembly, in late stage pre-50S ribosomal subunit interacts with ObgE and DarP(YjgA).

Its subcellular location is the cytoplasm. It catalyses the reaction uridine(1911/1915/1917) in 23S rRNA = pseudouridine(1911/1915/1917) in 23S rRNA. Functionally, responsible for synthesis of pseudouridine from uracil at positions 1911, 1915 and 1917 in 23S ribosomal RNA. Other positions are not modified. Uridine isomerization occurs as a late step during the assembly of the large ribosomal subunit. Member of a network of 50S ribosomal subunit biogenesis factors (ObgE, RluD, RsfS and DarP(YjgA)) which assembles along the 30S-50S interface, allowing 23S rRNA modification and preventing incorrect 23S rRNA structures from forming. The polypeptide is Ribosomal large subunit pseudouridine synthase D (Escherichia coli (strain K12)).